Consider the following 103-residue polypeptide: Large ribosomal subunit protein uL24 (103 aa).

This sequence belongs to the universal ribosomal protein uL24 family. As to quaternary structure, part of the 50S ribosomal subunit.

Its function is as follows. One of two assembly initiator proteins, it binds directly to the 5'-end of the 23S rRNA, where it nucleates assembly of the 50S subunit. Functionally, one of the proteins that surrounds the polypeptide exit tunnel on the outside of the subunit. The polypeptide is Large ribosomal subunit protein uL24 (Sinorhizobium fredii (strain NBRC 101917 / NGR234)).